A 154-amino-acid polypeptide reads, in one-letter code: Snaclec salmorin subunit A (154 aa).

A signal peptide spans 1 to 23 (MGRFIFVSFGLLVVFLSLSGTGA). Disulfide bonds link Cys27-Cys38, Cys55-Cys152, and Cys127-Cys144. The C-type lectin domain maps to 34-153 (NNGHCYQAFN…CGQRNPFVCE (120 aa)). Residues Ser66, Glu68, and Glu72 each contribute to the Ca(2+) site. Glu153 provides a ligand contact to Ca(2+).

It belongs to the snaclec family. As to quaternary structure, heterodimer of subunits A and B; disulfide-linked. As to expression, expressed by the venom gland.

Its subcellular location is the secreted. Functionally, inhibits thrombin-induced fibrinogen clotting and factor Xa-induced prothrombin activation. Binds to thrombin and prothrombin exosites. This chain is Snaclec salmorin subunit A, found in Gloydius brevicauda (Korean slamosa snake).